The primary structure comprises 78 residues: Conotoxin 1 (78 aa).

An N-terminal signal peptide occupies residues 1–22 (MKLTCMMFVAVLFLTASVFITA). Residues 23–51 (DDSRNGIENLPRMRRHEMKNPKASKLNKR) constitute a propeptide that is removed on maturation. Gln52 carries the pyrrolidone carboxylic acid modification. Cystine bridges form between Cys53-Cys69, Cys60-Cys73, and Cys68-Cys77.

The protein belongs to the conotoxin O1 superfamily. As to expression, expressed by the venom duct.

The protein resides in the secreted. In Conus imperialis (Imperial cone), this protein is Conotoxin 1.